Consider the following 299-residue polypeptide: Neomycin C epimerase (299 aa).

Positions 10-222 constitute a Radical SAM core domain; the sequence is PVRQVRAYRN…WNHIFETGRR (213 aa). C26, C30, C33, C226, and C247 together coordinate [4Fe-4S] cluster. Residue C249 is the Proton donor of the active site. [4Fe-4S] cluster-binding residues include C271 and C274.

Belongs to the radical SAM superfamily. [4Fe-4S] cluster serves as cofactor.

It carries out the reaction neomycin C + AH2 + S-adenosyl-L-methionine = neomycin B + 5'-deoxyadenosine + L-methionine + A + H(+). It functions in the pathway antibiotic biosynthesis; neomycin biosynthesis. Functionally, catalyzes the last step of neomycin B biosynthesis, i.e. the irreversible epimerization at C-5''' of neomycin C to give neomycin B. To a lesser extent, is also able to convert neomycin Y2 to neomycin Y1. The chain is Neomycin C epimerase from Streptomyces fradiae (Streptomyces roseoflavus).